The primary structure comprises 127 residues: Nuclear transport factor 2 (127 aa).

Lys4 carries the N6-acetyllysine modification. In terms of domain architecture, NTF2 spans 10–121; the sequence is IGSSFIQHYY…WVCTNDMFRL (112 aa).

Homodimer. Interacts with RAN (GDP-bound form); the interaction is direct and regulates RAN nuclear import. Interacts with the nucleoporins NUP54, NUP58 and NUP62 (via FG repeats); recruits NUTF2 to the nuclear pore complex a step required for NUTF2-mediated GDP-bound RAN nuclear import. Interacts with CAPG; mediates its nuclear import.

The protein resides in the cytoplasm. It localises to the cytosol. It is found in the nucleus outer membrane. Its subcellular location is the nucleus. The protein localises to the nuclear pore complex. The protein resides in the nucleus inner membrane. It localises to the nucleoplasm. Mediates the import of GDP-bound RAN from the cytoplasm into the nucleus which is essential for the function of RAN in cargo receptor-mediated nucleocytoplasmic transport. Thereby, plays indirectly a more general role in cargo receptor-mediated nucleocytoplasmic transport. Interacts with GDP-bound RAN in the cytosol, recruits it to the nuclear pore complex via its interaction with nucleoporins and promotes its nuclear import. This chain is Nuclear transport factor 2, found in Bos taurus (Bovine).